A 431-amino-acid chain; its full sequence is Enolase (431 aa).

A (2R)-2-phosphoglycerate-binding site is contributed by Gln-166. Glu-208 acts as the Proton donor in catalysis. Asp-245, Glu-288, and Asp-315 together coordinate Mg(2+). (2R)-2-phosphoglycerate-binding residues include Lys-340, Arg-369, Ser-370, and Lys-391. The Proton acceptor role is filled by Lys-340.

The protein belongs to the enolase family. The cofactor is Mg(2+).

The protein resides in the cytoplasm. It is found in the secreted. Its subcellular location is the cell surface. The enzyme catalyses (2R)-2-phosphoglycerate = phosphoenolpyruvate + H2O. Its pathway is carbohydrate degradation; glycolysis; pyruvate from D-glyceraldehyde 3-phosphate: step 4/5. Its function is as follows. Catalyzes the reversible conversion of 2-phosphoglycerate (2-PG) into phosphoenolpyruvate (PEP). It is essential for the degradation of carbohydrates via glycolysis. The chain is Enolase from Clostridium botulinum (strain Kyoto / Type A2).